Here is a 1235-residue protein sequence, read N- to C-terminus: Serine/threonine-protein kinase TAO2 (1235 aa).

Phosphoserine is present on S9. The 254-residue stretch at 28 to 281 folds into the Protein kinase domain; that stretch reads FSDLREIGHG…SEVLLKHRFV (254 aa). Residues 34–42 and K57 each bind ATP; that span reads IGHGSFGAV. D151 (proton acceptor) is an active-site residue. Position 181 is a phosphoserine (S181). The segment at 318 to 457 is disordered; it reads QEAPNGPGAE…TSTTSSARRR (140 aa). A compositionally biased stretch (low complexity) spans 350-374; the sequence is SSHSVPSMSISASSQSSSVNSLADA. Acidic residues predominate over residues 375–393; the sequence is SDNEEEEEEEEEEEEEEEG. Basic and acidic residues predominate over residues 394 to 409; it reads PEAREMAMMQEGEHTV. Phosphoserine is present on S414. Coiled coils occupy residues 486-547 and 574-601; these read SALR…RRHQ and KELA…LQEN. S656 is modified (phosphoserine). The stretch at 681-713 forms a coiled coil; it reads LRQHEATRELELRQLQAVQRTRAELTRLQHQTE. 3 disordered regions span residues 732 to 777, 804 to 835, and 891 to 939; these read HAAQ…QPCS, KEGA…GSLV, and QGPA…RPCP. The segment covering 766-777 has biased composition (polar residues); sequence NTGTPIEQQPCS. Residues S777, S825, and S827 each carry the phosphoserine modification. Residues 899 to 908 are compositionally biased toward acidic residues; sequence PEEEEEEEEG. Over residues 924–934 the composition is skewed to pro residues; it reads PDIPPEPPPTH. Helical transmembrane passes span 965–985 and 987–1007; these read LLPL…GGGL and AALL…LLLC. H1011 and G1031 each carry phosphoserine. Transmembrane regions (helical) follow at residues 1012-1032, 1043-1063, and 1166-1186; these read LPSS…VLGL, LGLG…LVAM, and QGLA…WGLL. Positions 1198–1235 are disordered; that stretch reads LPRSQRQLGPPASRQPLPGTLAGRRSRTRQSRALPPWR.

The protein belongs to the protein kinase superfamily. STE Ser/Thr protein kinase family. STE20 subfamily. As to quaternary structure, interacts with MAP2K3 and MAP2K6. Self-associates. Interacts with tubulins through the C-terminal domain. Interacts with MAP3K7 and interferes with MAP3K7-binding to CHUK and thus prevents NF-kappa-B activation. Isoform 2 interacts with PCDH8; this complex may also include CDH2. Requires Mg(2+) as cofactor. Post-translationally, isoforms 1 and 2 are autophosphorylated. In terms of processing, C-terminal cleavage of isoform 1 and subsequent nuclear localization requires CASP9 activity. Autophosphorylated. Phosphorylated by ATM. Post-translationally, phosphorylated on Ser-1031 by MAPK14. This phosphorylation is required PCDH8 for endocytosis. In terms of tissue distribution, ubiquitously expressed, with a higher level of expression in testis and brain.

Its subcellular location is the cytoplasmic vesicle membrane. The protein resides in the cytoplasm. It is found in the cytoskeleton. The protein localises to the nucleus. It localises to the cell projection. Its subcellular location is the dendrite. The enzyme catalyses L-seryl-[protein] + ATP = O-phospho-L-seryl-[protein] + ADP + H(+). It catalyses the reaction L-threonyl-[protein] + ATP = O-phospho-L-threonyl-[protein] + ADP + H(+). Selectively inhibited by the enantiopure organoruthenium inhibitor 9E1. Activated following arsenic trioxide (As(2)O(3)) treatment. Functionally, serine/threonine-protein kinase involved in different processes such as membrane blebbing and apoptotic bodies formation DNA damage response and MAPK14/p38 MAPK stress-activated MAPK cascade. Phosphorylates itself, MBP, activated MAPK8, MAP2K3, MAP2K6 and tubulins. Activates the MAPK14/p38 MAPK signaling pathway through the specific activation and phosphorylation of the upstream MAP2K3 and MAP2K6 kinases. In response to DNA damage, involved in the G2/M transition DNA damage checkpoint by activating the p38/MAPK14 stress-activated MAPK cascade, probably by mediating phosphorylation of upstream MAP2K3 and MAP2K6 kinases. Isoform 1, but not isoform 2, plays a role in apoptotic morphological changes, including cell contraction, membrane blebbing and apoptotic bodies formation. This function, which requires the activation of MAPK8/JNK and nuclear localization of C-terminally truncated isoform 1, may be linked to the mitochondrial CASP9-associated death pathway. Isoform 1 binds to microtubules and affects their organization and stability independently of its kinase activity. Prevents MAP3K7-mediated activation of CHUK, and thus NF-kappa-B activation, but not that of MAPK8/JNK. May play a role in the osmotic stress-MAPK8 pathway. Isoform 2, but not isoform 1, is required for PCDH8 endocytosis. Following homophilic interactions between PCDH8 extracellular domains, isoform 2 phosphorylates and activates MAPK14/p38 MAPK which in turn phosphorylates isoform 2. This process leads to PCDH8 endocytosis and CDH2 cointernalization. Both isoforms are involved in MAPK14 phosphorylation. The sequence is that of Serine/threonine-protein kinase TAO2 (TAOK2) from Homo sapiens (Human).